Here is a 210-residue protein sequence, read N- to C-terminus: Protein GET1 (210 aa).

Residues 1–4 (MPSL) lie on the Lumenal side of the membrane. The helical transmembrane segment at 5-24 (LIIVLIIHVVTYLINTIGAN) threads the bilayer. Over 25 to 110 (TIDSLLWLLY…SFDLAVKSIR (86 aa)) the chain is Cytoplasmic. The stretch at 39–95 (NQTSQTANEQRRLKREVMQLKREMNATSSQDEFAKWAKLRRRHDKTMEEYEAKNKAL) forms a coiled coil. The chain crosses the membrane as a helical span at residues 111–131 (FFSTTGLKLFLQFWCSKTPIF). Over 132–155 (ELPRGWIPWQVEWVLSFPRAPLGT) the chain is Lumenal. A helical membrane pass occupies residues 156–172 (VSIQIWGGVCATVVSLA). Residues 173 to 210 (GDAIGVVNVYLTSKAPKQKEPATSGENSARPMAIKKEL) are Cytoplasmic-facing. Residues 189–210 (KQKEPATSGENSARPMAIKKEL) form a disordered region.

Belongs to the WRB/GET1 family. In terms of assembly, interacts with GET3.

The protein localises to the endoplasmic reticulum membrane. Required for the post-translational delivery of tail-anchored (TA) proteins to the endoplasmic reticulum. Acts as a membrane receptor for soluble GET3, which recognizes and selectively binds the transmembrane domain of TA proteins in the cytosol. The sequence is that of Protein GET1 from Coccidioides immitis (strain RS) (Valley fever fungus).